Consider the following 894-residue polypeptide: Bifunctional enzyme RhaA/RhaB (894 aa).

A rhamnulokinase region spans residues 1-465; the sequence is MGEYRLAVDI…TAFPVTYFLP (465 aa). An L-rhamnose isomerase region spans residues 466 to 894; it reads QRSESHVSSR…KRESEKAKQR (429 aa). Residues H730, D762, and D764 each coordinate Mn(2+).

In the N-terminal section; belongs to the rhamnulokinase family. This sequence in the C-terminal section; belongs to the rhamnose isomerase family. Mn(2+) is required as a cofactor.

It localises to the cytoplasm. The catalysed reaction is L-rhamnulose + ATP = L-rhamnulose 1-phosphate + ADP + H(+). It catalyses the reaction L-rhamnopyranose = L-rhamnulose. Its pathway is carbohydrate degradation; L-rhamnose degradation; glycerone phosphate from L-rhamnose: step 1/3. It participates in carbohydrate degradation; L-rhamnose degradation; glycerone phosphate from L-rhamnose: step 2/3. This chain is Bifunctional enzyme RhaA/RhaB (rhaAB), found in Shouchella clausii (strain KSM-K16) (Alkalihalobacillus clausii).